An 83-amino-acid polypeptide reads, in one-letter code: MSVGDETTIFDFGNQMPKDIHDTLEIVYNALEEKGYNPINQIVGYLMSGDPAYIPRLNDARNLIKRHERDEIIEELVRVYLKK.

The protein belongs to the UPF0297 family.

The protein is UPF0297 protein LCK_00468 of Leuconostoc citreum (strain KM20).